Consider the following 515-residue polypeptide: Probable NADPH:adrenodoxin oxidoreductase, mitochondrial (515 aa).

The FAD site is built by Ala52, Glu73, Leu81, and Ile119. NADP(+) is bound by residues 191 to 194, 236 to 237, and Glu248; these read QGNV and RR. Residues Trp419 and 426–428 contribute to the FAD site; that span reads GSI. Gly426 is a binding site for NADP(+).

The protein belongs to the ferredoxin--NADP reductase type 1 family. It depends on FAD as a cofactor.

It localises to the mitochondrion inner membrane. The enzyme catalyses 2 reduced [adrenodoxin] + NADP(+) + H(+) = 2 oxidized [adrenodoxin] + NADPH. The chain is Probable NADPH:adrenodoxin oxidoreductase, mitochondrial (fdxr) from Dictyostelium discoideum (Social amoeba).